The primary structure comprises 285 residues: Avenin-like b2 (285 aa).

The N-terminal stretch at 1–18 (MKVFILALLALTATTAIA) is a signal peptide.

The protein belongs to the prolamin family. In terms of processing, contains disulfide bonds.

Its function is as follows. Seed storage protein. Might be integrated via inter-chain disulfide bonds within the glutenin polymer. This chain is Avenin-like b2, found in Triticum aestivum (Wheat).